We begin with the raw amino-acid sequence, 270 residues long: 5-deoxy-glucuronate isomerase (270 aa).

It belongs to the isomerase IolB family.

The catalysed reaction is 5-deoxy-D-glucuronate = 5-dehydro-2-deoxy-D-gluconate. The protein operates within polyol metabolism; myo-inositol degradation into acetyl-CoA; acetyl-CoA from myo-inositol: step 4/7. Its function is as follows. Involved in the isomerization of 5-deoxy-glucuronate (5DG) to 5-dehydro-2-deoxy-D-gluconate (DKG or 2-deoxy-5-keto-D-gluconate). The protein is 5-deoxy-glucuronate isomerase of Halalkalibacterium halodurans (strain ATCC BAA-125 / DSM 18197 / FERM 7344 / JCM 9153 / C-125) (Bacillus halodurans).